Consider the following 869-residue polypeptide: Kinesin-like protein KIN-10A (869 aa).

A compositionally biased stretch (polar residues) spans 1–36 (MAPTPSSSRSNQTQYTLIRTPQTKQRLNFHSKTPNP). The tract at residues 1 to 50 (MAPTPSSSRSNQTQYTLIRTPQTKQRLNFHSKTPNPDGSKDPSPPEHPVE) is disordered. Residues 38-50 (GSKDPSPPEHPVE) show a composition bias toward basic and acidic residues. Positions 48–367 (PVEVIGRIRD…LEYGAKAKCI (320 aa)) constitute a Kinesin motor domain. 129–136 (GPTGAGKS) is a binding site for ATP. A coiled-coil region spans residues 393 to 515 (RIAAMDEFII…EIEVEFRRSN (123 aa)).

It belongs to the TRAFAC class myosin-kinesin ATPase superfamily. Kinesin family. KIN-10 subfamily. As to quaternary structure, binds microtubules.

Its subcellular location is the cytoplasm. It localises to the cytoskeleton. It is found in the phragmoplast. Probable plus end-directed motor protein that may contribute to the transport of Golgi-derived vesicles in the phragmoplast. This chain is Kinesin-like protein KIN-10A, found in Arabidopsis thaliana (Mouse-ear cress).